The primary structure comprises 69 residues: Large ribosomal subunit protein uL29 (69 aa).

The protein belongs to the universal ribosomal protein uL29 family.

The chain is Large ribosomal subunit protein uL29 from Staphylococcus haemolyticus (strain JCSC1435).